The following is a 219-amino-acid chain: Small ribosomal subunit protein uS3 (219 aa).

The region spanning 39 to 107 is the KH type-2 domain; it reads LRKFLKKKLH…EVLIDIQEVR (69 aa).

This sequence belongs to the universal ribosomal protein uS3 family. In terms of assembly, part of the 30S ribosomal subunit. Forms a tight complex with proteins S10 and S14.

In terms of biological role, binds the lower part of the 30S subunit head. Binds mRNA in the 70S ribosome, positioning it for translation. In Desulfatibacillum aliphaticivorans, this protein is Small ribosomal subunit protein uS3.